The chain runs to 505 residues: ADP-ribosylarginine hydrolase CG2909 (505 aa).

ADP-D-ribose contacts are provided by arginine 198, glycine 336, glycine 338, glycine 340, valine 341, tryptophan 342, tryptophan 377, aspartate 432, asparagine 439, glutamate 440, glycine 450, and aspartate 451.

The catalysed reaction is N(omega)-(ADP-D-ribosyl)-L-arginyl-[protein] + H2O = ADP-D-ribose + L-arginyl-[protein]. The enzyme catalyses N(omega)-(ADP-D-ribosyl)-L-arginine + H2O = ADP-D-ribose + L-arginine. In terms of biological role, protein ADP-ribosyl hydrolase that specifically removes mono-ADP-ribosyl modifications from protein arginine residues. The sequence is that of ADP-ribosylarginine hydrolase CG2909 from Drosophila melanogaster (Fruit fly).